Consider the following 795-residue polypeptide: Forkhead box protein P4 (795 aa).

Over residues 1 to 25 the composition is skewed to polar residues; the sequence is MMVESASETIRSAPSGQNGVGSLSA. A disordered region spans residues 1–62; that stretch reads MMVESASETI…SGGADSNGEM (62 aa). Positions 36–45 are enriched in low complexity; sequence AGTAPAAGRD. Phosphoserine is present on residues Ser-58 and Ser-92. Residue Lys-181 forms a Glycyl lysine isopeptide (Lys-Gly) (interchain with G-Cter in SUMO2) linkage. Disordered stretches follow at residues 233 to 252 and 265 to 310; these read PQLWKGEGAPGQPAEDSGRQ and TSFA…PLYG. A compositionally biased stretch (basic and acidic residues) spans 292–303; it reads SRRDSSSHEETP. The segment at 312-337 adopts a C2H2-type zinc-finger fold; it reads GECKWPGCETLCEDLGQFIKHLNTEH. Residues 354–375 are leucine-zipper; sequence VQQLEIQLAKESERLQAMMAHL. The interval 379–437 is disordered; that stretch reads PSEPKPFSQPVTVSADPFPDGLVHPPTSAAAPVTPLRPPGLGSASLHSGGPARRRSNDK. A Glycyl lysine isopeptide (Lys-Gly) (interchain with G-Cter in SUMO2) cross-link involves residue Lys-383. Residues 459-549 constitute a DNA-binding region (fork-head); it reads RPPFTYASLI…PPKMTGSPTL (91 aa). The residue at position 546 (Ser-546) is a Phosphoserine. The segment at 589 to 671 is disordered; it reads ASSLLPLSQE…LEEDLGGEDM (83 aa). Positions 609-627 are enriched in polar residues; that stretch reads SNGSSSPPRLSPPQYSHQI. The segment covering 628 to 642 has biased composition (basic and acidic residues); that stretch reads QVKEEPAEAEEDRRP.

Forms homodimers and heterodimers with FOXP1 and FOXP2. Dimerization is required for DNA-binding. In terms of tissue distribution, expressed in the adult heart, brain, spleen lung, liver, kidney and testes.

The protein resides in the nucleus. Functionally, transcriptional repressor that represses lung-specific expression. This is Forkhead box protein P4 from Mus musculus (Mouse).